The sequence spans 1219 residues: Type IV pilus biogenesis factor PilY1 homolog PD_0502 (1219 aa).

The signal sequence occupies residues methionine 1–alanine 35. Residues glycine 212–serine 234 are disordered. 4 residues coordinate Ca(2+): glutamine 958, asparagine 960, isoleucine 962, and aspartate 964.

This sequence belongs to the PilY1 family.

It localises to the fimbrium. One of the three PilY1 homologs of X.fastidiosa, which are involved in bacterial twitching motility as component of the filamentous type IV pili (T4P). The chain is Type IV pilus biogenesis factor PilY1 homolog PD_0502 from Xylella fastidiosa (strain Temecula1 / ATCC 700964).